Here is a 309-residue protein sequence, read N- to C-terminus: Curved DNA-binding protein (309 aa).

In terms of domain architecture, J spans 5 to 69 (DYYAILGVKP…ERRAEYDQLR (65 aa)).

It is found in the cytoplasm. The protein localises to the nucleoid. DNA-binding protein that preferentially recognizes a curved DNA sequence. It is probably a functional analog of DnaJ; displays overlapping activities with DnaJ, but functions under different conditions, probably acting as a molecular chaperone in an adaptive response to environmental stresses other than heat shock. Lacks autonomous chaperone activity; binds native substrates and targets them for recognition by DnaK. Its activity is inhibited by the binding of CbpM. The chain is Curved DNA-binding protein from Serratia proteamaculans (strain 568).